The following is a 197-amino-acid chain: uncharacterized protein (197 aa).

Over residues 168–185 (QRDDFSEDSHANDPKLVG) the composition is skewed to basic and acidic residues. The disordered stretch occupies residues 168–197 (QRDDFSEDSHANDPKLVGDDYVPQAPEQIN).

This is an uncharacterized protein from Escherichia coli (strain K12).